A 211-amino-acid chain; its full sequence is tRNA (guanine-N(7)-)-methyltransferase (211 aa).

Residues Asp-40, Glu-65, Asn-92, and Asp-118 each contribute to the S-adenosyl-L-methionine site. Residue Asp-118 is part of the active site. 2 residues coordinate substrate: Lys-122 and Asp-154.

It belongs to the class I-like SAM-binding methyltransferase superfamily. TrmB family.

The enzyme catalyses guanosine(46) in tRNA + S-adenosyl-L-methionine = N(7)-methylguanosine(46) in tRNA + S-adenosyl-L-homocysteine. Its pathway is tRNA modification; N(7)-methylguanine-tRNA biosynthesis. In terms of biological role, catalyzes the formation of N(7)-methylguanine at position 46 (m7G46) in tRNA. The protein is tRNA (guanine-N(7)-)-methyltransferase of Microcystis aeruginosa (strain NIES-843 / IAM M-2473).